The chain runs to 185 residues: Protein GrpE (185 aa).

This sequence belongs to the GrpE family. In terms of assembly, homodimer.

The protein resides in the cytoplasm. Its function is as follows. Participates actively in the response to hyperosmotic and heat shock by preventing the aggregation of stress-denatured proteins, in association with DnaK and GrpE. It is the nucleotide exchange factor for DnaK and may function as a thermosensor. Unfolded proteins bind initially to DnaJ; upon interaction with the DnaJ-bound protein, DnaK hydrolyzes its bound ATP, resulting in the formation of a stable complex. GrpE releases ADP from DnaK; ATP binding to DnaK triggers the release of the substrate protein, thus completing the reaction cycle. Several rounds of ATP-dependent interactions between DnaJ, DnaK and GrpE are required for fully efficient folding. This chain is Protein GrpE, found in Methanobrevibacter smithii (strain ATCC 35061 / DSM 861 / OCM 144 / PS).